The primary structure comprises 461 residues: Photosystem II CP43 reaction center protein (461 aa).

A propeptide spanning residues 1-2 (ME) is cleaved from the precursor. Thr-3 carries the N-acetylthreonine modification. Thr-3 is subject to Phosphothreonine. Transmembrane regions (helical) follow at residues 57 to 81 (LFEV…PHLA), 122 to 143 (LLGP…KDRN), 166 to 188 (KASY…RKIT), 243 to 263 (KPFA…LSYS), and 279 to 300 (WFNN…ASQA). Glu-355 lines the [CaMn4O5] cluster pocket. The helical transmembrane segment at 435–459 (RARAAAAGFEKGIDRDFEPVLSMTP) threads the bilayer.

The protein belongs to the PsbB/PsbC family. PsbC subfamily. In terms of assembly, PSII is composed of 1 copy each of membrane proteins PsbA, PsbB, PsbC, PsbD, PsbE, PsbF, PsbH, PsbI, PsbJ, PsbK, PsbL, PsbM, PsbT, PsbX, PsbY, PsbZ, Psb30/Ycf12, at least 3 peripheral proteins of the oxygen-evolving complex and a large number of cofactors. It forms dimeric complexes. Binds multiple chlorophylls and provides some of the ligands for the Ca-4Mn-5O cluster of the oxygen-evolving complex. It may also provide a ligand for a Cl- that is required for oxygen evolution. PSII binds additional chlorophylls, carotenoids and specific lipids. is required as a cofactor.

Its subcellular location is the plastid. It is found in the chloroplast thylakoid membrane. Functionally, one of the components of the core complex of photosystem II (PSII). It binds chlorophyll and helps catalyze the primary light-induced photochemical processes of PSII. PSII is a light-driven water:plastoquinone oxidoreductase, using light energy to abstract electrons from H(2)O, generating O(2) and a proton gradient subsequently used for ATP formation. This is Photosystem II CP43 reaction center protein from Lotus japonicus (Lotus corniculatus var. japonicus).